Consider the following 567-residue polypeptide: Potassium-transporting ATPase potassium-binding subunit (567 aa).

12 consecutive transmembrane segments (helical) span residues 11–31, 67–87, 136–156, 179–199, 255–275, 286–306, 333–353, 363–383, 385–405, 422–442, 489–509, and 532–552; these read LYLLVLLALAWPLGRYLAALL, AAAILLFNLAGVVLLFLLQRW, GLAVQNFLSAATGIAVVVALV, LWLLLPLSIVVALVLVWQGVV, FSNWVEMLSIFLVPAALVVMF, VVLLAAMTVLFVGAFAVVYLA, FGVLASSLFATITTAASCGAV, LGGGMTMLLMQLGEVVFGGVG, GLYGMLLFAVLAVFMAGLMIG, LVSVAILVGPLLVLAGTAIAV, LMLAVAMWFGRFAVIVPVLAL, and LFVVLLVLSVLLIGALTYIPA.

This sequence belongs to the KdpA family. In terms of assembly, the system is composed of three essential subunits: KdpA, KdpB and KdpC.

It is found in the cell inner membrane. Part of the high-affinity ATP-driven potassium transport (or Kdp) system, which catalyzes the hydrolysis of ATP coupled with the electrogenic transport of potassium into the cytoplasm. This subunit binds the periplasmic potassium ions and delivers the ions to the membrane domain of KdpB through an intramembrane tunnel. The chain is Potassium-transporting ATPase potassium-binding subunit from Laribacter hongkongensis (strain HLHK9).